We begin with the raw amino-acid sequence, 920 residues long: Isoleucine--tRNA ligase (920 aa).

Residues 57 to 67 (PYANGDIHLGH) carry the 'HIGH' region motif. An L-isoleucyl-5'-AMP-binding site is contributed by Glu560. Residues 601–605 (KMSKS) carry the 'KMSKS' region motif. Residue Lys604 coordinates ATP. Zn(2+)-binding residues include Cys890, Cys893, Cys910, and Cys913.

The protein belongs to the class-I aminoacyl-tRNA synthetase family. IleS type 1 subfamily. Monomer. Zn(2+) is required as a cofactor.

The protein resides in the cytoplasm. It catalyses the reaction tRNA(Ile) + L-isoleucine + ATP = L-isoleucyl-tRNA(Ile) + AMP + diphosphate. In terms of biological role, catalyzes the attachment of isoleucine to tRNA(Ile). As IleRS can inadvertently accommodate and process structurally similar amino acids such as valine, to avoid such errors it has two additional distinct tRNA(Ile)-dependent editing activities. One activity is designated as 'pretransfer' editing and involves the hydrolysis of activated Val-AMP. The other activity is designated 'posttransfer' editing and involves deacylation of mischarged Val-tRNA(Ile). This is Isoleucine--tRNA ligase from Caldicellulosiruptor saccharolyticus (strain ATCC 43494 / DSM 8903 / Tp8T 6331).